The following is a 444-amino-acid chain: Elongation factor 1-alpha (444 aa).

The 222-residue stretch at 15 to 236 folds into the tr-type G domain; that stretch reads KPHLNLAVIG…ALDTFQPPPR (222 aa). Residues 24–31 are G1; the sequence is GHVDNGKS. Position 24–31 (24–31) interacts with GTP; that stretch reads GHVDNGKS. Mg(2+) is bound at residue S31. Positions 80–84 are G2; the sequence is GVTIE. The interval 101–104 is G3; the sequence is DLPG. Residues 101–105 and 163–166 contribute to the GTP site; these read DLPGH and NKMD. A G4 region spans residues 163 to 166; it reads NKMD. A G5 region spans residues 202 to 204; it reads SAI.

This sequence belongs to the TRAFAC class translation factor GTPase superfamily. Classic translation factor GTPase family. EF-Tu/EF-1A subfamily.

Its subcellular location is the cytoplasm. It catalyses the reaction GTP + H2O = GDP + phosphate + H(+). In terms of biological role, GTP hydrolase that promotes the GTP-dependent binding of aminoacyl-tRNA to the A-site of ribosomes during protein biosynthesis. This is Elongation factor 1-alpha from Pyrobaculum islandicum (strain DSM 4184 / JCM 9189 / GEO3).